The following is a 555-amino-acid chain: Steroid-22-oyl-CoA synthetase (555 aa).

The protein belongs to the ATP-dependent AMP-binding enzyme family.

The catalysed reaction is 3-oxochol-4-en-22-oate + ATP + CoA = 3-oxochol-4-en-22-oyl-CoA + AMP + diphosphate. It catalyses the reaction 3-hydroxy-9-oxo-9,10-seco-chola-1,3,5-trien-22-oate + ATP + CoA = 3-hydroxy-9-oxo-9,10-seco-chola-1,3,5-trien-22-oyl-CoA + AMP + diphosphate. Its pathway is steroid metabolism. Involved in cholate catabolism. Catalyzes the ATP-dependent formation of CoA thioesters of steroids with isopropanoyl side chains, likely occurring as degradation intermediates. Can use 4-BNC, HSBNC and HIDP as substrate. This chain is Steroid-22-oyl-CoA synthetase, found in Rhodococcus jostii (strain RHA1).